The primary structure comprises 255 residues: Small ribosomal subunit protein eS1 (255 aa).

Residues 1–18 (MAVGKNKRLSKGKKGLKK) show a composition bias toward basic residues. Residues 1 to 28 (MAVGKNKRLSKGKKGLKKRTQDPFSRKD) are disordered. At A2 the chain carries N-acetylalanine; partial. Basic and acidic residues predominate over residues 19 to 28 (RTQDPFSRKD).

The protein belongs to the eukaryotic ribosomal protein eS1 family. In terms of assembly, component of the small ribosomal subunit. Mature ribosomes consist of a small (40S) and a large (60S) subunit. The 40S subunit contains about 33 different proteins and 1 molecule of RNA (18S). The 60S subunit contains about 49 different proteins and 3 molecules of RNA (25S, 5.8S and 5S).

The protein localises to the cytoplasm. The sequence is that of Small ribosomal subunit protein eS1 from Paracoccidioides lutzii (strain ATCC MYA-826 / Pb01) (Paracoccidioides brasiliensis).